Reading from the N-terminus, the 195-residue chain is GTP cyclohydrolase-2 (195 aa).

48–52 (RIHSE) is a GTP binding site. Residues Cys-53, Cys-64, and Cys-66 each contribute to the Zn(2+) site. GTP is bound by residues Gln-69, 90–92 (EGR), and Thr-112. Residue Asp-124 is the Proton acceptor of the active site. Catalysis depends on Arg-126, which acts as the Nucleophile. Residues Thr-147 and Lys-152 each coordinate GTP.

Belongs to the GTP cyclohydrolase II family. Zn(2+) is required as a cofactor.

The enzyme catalyses GTP + 4 H2O = 2,5-diamino-6-hydroxy-4-(5-phosphoribosylamino)-pyrimidine + formate + 2 phosphate + 3 H(+). It participates in cofactor biosynthesis; riboflavin biosynthesis; 5-amino-6-(D-ribitylamino)uracil from GTP: step 1/4. Its function is as follows. Catalyzes the conversion of GTP to 2,5-diamino-6-ribosylamino-4(3H)-pyrimidinone 5'-phosphate (DARP), formate and pyrophosphate. This Campylobacter fetus subsp. fetus (strain 82-40) protein is GTP cyclohydrolase-2.